Consider the following 783-residue polypeptide: BMP/retinoic acid-inducible neural-specific protein 2 (783 aa).

The signal sequence occupies residues 1-33 (MRWQCGTRFRGLRPVVAPWTALLALGLPGWVLA). The MACPF domain maps to 85-281 (RYRIYREFAR…FVAAALSYIT (197 aa)). Residues N185, N354, N473, N579, N626, and N658 are each glycosylated (N-linked (GlcNAc...) asparagine).

It belongs to the BRINP family.

It is found in the secreted. In terms of biological role, inhibits neuronal cell proliferation by negative regulation of the cell cycle transition. The sequence is that of BMP/retinoic acid-inducible neural-specific protein 2 (BRINP2) from Pongo abelii (Sumatran orangutan).